Consider the following 95-residue polypeptide: Cobalt transport protein CbiN (95 aa).

The next 2 helical transmembrane spans lie at 5–25 (HIIL…IYAG) and 67–87 (LLFA…IGYY).

It belongs to the CbiN family. In terms of assembly, forms an energy-coupling factor (ECF) transporter complex composed of an ATP-binding protein (A component, CbiO), a transmembrane protein (T component, CbiQ) and 2 possible substrate-capture proteins (S components, CbiM and CbiN) of unknown stoichimetry.

Its subcellular location is the cell membrane. The protein operates within cofactor biosynthesis; adenosylcobalamin biosynthesis. Part of the energy-coupling factor (ECF) transporter complex CbiMNOQ involved in cobalt import. This is Cobalt transport protein CbiN from Methanocaldococcus jannaschii (strain ATCC 43067 / DSM 2661 / JAL-1 / JCM 10045 / NBRC 100440) (Methanococcus jannaschii).